Reading from the N-terminus, the 545-residue chain is ATP synthase subunit alpha (545 aa).

172–179 (GDRKTGKT) is an ATP binding site.

Belongs to the ATPase alpha/beta chains family. In terms of assembly, F-type ATPases have 2 components, CF(1) - the catalytic core - and CF(0) - the membrane proton channel. CF(1) has five subunits: alpha(3), beta(3), gamma(1), delta(1), epsilon(1). CF(0) has three main subunits: a(1), b(2) and c(9-12). The alpha and beta chains form an alternating ring which encloses part of the gamma chain. CF(1) is attached to CF(0) by a central stalk formed by the gamma and epsilon chains, while a peripheral stalk is formed by the delta and b chains.

It is found in the cell membrane. It carries out the reaction ATP + H2O + 4 H(+)(in) = ADP + phosphate + 5 H(+)(out). In terms of biological role, produces ATP from ADP in the presence of a proton gradient across the membrane. The alpha chain is a regulatory subunit. This Nocardia farcinica (strain IFM 10152) protein is ATP synthase subunit alpha.